Here is a 391-residue protein sequence, read N- to C-terminus: S-adenosylmethionine synthase (391 aa).

ATP is bound at residue His19. Asp21 is a Mg(2+) binding site. Residue Glu47 participates in K(+) binding. L-methionine-binding residues include Glu60 and Gln103. The flexible loop stretch occupies residues 103-113; that stretch reads QSPDIAQGVDR. ATP contacts are provided by residues 168 to 170, 236 to 237, Asp245, 251 to 252, Ala268, and Lys272; these read DGK, RF, and RK. Position 245 (Asp245) interacts with L-methionine. L-methionine is bound at residue Lys276.

It belongs to the AdoMet synthase family. In terms of assembly, homotetramer; dimer of dimers. Mg(2+) is required as a cofactor. The cofactor is K(+).

It localises to the cytoplasm. The catalysed reaction is L-methionine + ATP + H2O = S-adenosyl-L-methionine + phosphate + diphosphate. It functions in the pathway amino-acid biosynthesis; S-adenosyl-L-methionine biosynthesis; S-adenosyl-L-methionine from L-methionine: step 1/1. In terms of biological role, catalyzes the formation of S-adenosylmethionine (AdoMet) from methionine and ATP. The overall synthetic reaction is composed of two sequential steps, AdoMet formation and the subsequent tripolyphosphate hydrolysis which occurs prior to release of AdoMet from the enzyme. This Oleidesulfovibrio alaskensis (strain ATCC BAA-1058 / DSM 17464 / G20) (Desulfovibrio alaskensis) protein is S-adenosylmethionine synthase.